The chain runs to 336 residues: Anthranilate phosphoribosyltransferase (336 aa).

Residues G82, 85–86 (GD), T90, 92–95 (NIST), 110–118 (KHGNRFASG), and S122 contribute to the 5-phospho-alpha-D-ribose 1-diphosphate site. Anthranilate is bound at residue G82. S94 is a binding site for Mg(2+). Position 113 (N113) interacts with anthranilate. R168 serves as a coordination point for anthranilate. Residues D227 and E228 each contribute to the Mg(2+) site.

This sequence belongs to the anthranilate phosphoribosyltransferase family. As to quaternary structure, homodimer. It depends on Mg(2+) as a cofactor.

It catalyses the reaction N-(5-phospho-beta-D-ribosyl)anthranilate + diphosphate = 5-phospho-alpha-D-ribose 1-diphosphate + anthranilate. It participates in amino-acid biosynthesis; L-tryptophan biosynthesis; L-tryptophan from chorismate: step 2/5. Functionally, catalyzes the transfer of the phosphoribosyl group of 5-phosphorylribose-1-pyrophosphate (PRPP) to anthranilate to yield N-(5'-phosphoribosyl)-anthranilate (PRA). This Desulfitobacterium hafniense (strain Y51) protein is Anthranilate phosphoribosyltransferase.